A 1205-amino-acid chain; its full sequence is Nitric oxide synthase 3 (1205 aa).

The disordered stretch occupies residues 1 to 73; the sequence is MGNLKSVGQE…PPEGPKFPRV (73 aa). Residue Gly2 is the site of N-myristoyl glycine attachment. 2 S-palmitoyl cysteine lipidation sites follow: Cys15 and Cys26. Over residues 15-27 the composition is skewed to gly residues; it reads CGLGLGLGLGLCG. The span at 33-47 shows a compositional bias: pro residues; that stretch reads TPAPEPSRAPAPATP. Residues Cys96 and Cys101 each coordinate Zn(2+). The interaction with NOSIP stretch occupies residues 100 to 488; sequence RCLGSLVLPR…PDPWKGSAAK (389 aa). Ser104 lines the (6R)-L-erythro-5,6,7,8-tetrahydrobiopterin pocket. Ser116 is modified (phosphoserine; by CDK5). Cys186 is a heme b binding site. The L-arginine site is built by Gln249, Trp358, Tyr359, Glu363, and Asn368. 3 residues coordinate (6R)-L-erythro-5,6,7,8-tetrahydrobiopterin: Ala448, Trp449, and Phe462. Tyr477 provides a ligand contact to heme b. The segment at 492–512 is calmodulin-binding; that stretch reads IARKKTFKEVANAVKISASLM. Residue Thr497 is modified to Phosphothreonine; by AMPK. A Flavodoxin-like domain is found at 522-705; the sequence is ASILYASETV…AFRGWAQAAF (184 aa). FMN contacts are provided by Ser528, Glu529, Thr530, Arg532, Ser574, and Thr575. Phosphoserine is present on residues Ser617, Ser635, and Ser640. FMN-binding residues include Ser656, Cys663, Glu689, and Gln693. The region spanning 758 to 1004 is the FAD-binding FR-type domain; sequence RKMFQATVLS…IRAAPSFRLP (247 aa). Residue Arg778 coordinates NADP(+). FAD is bound at residue His800. The segment at 820 to 848 is disordered; it reads EDPTPPTESVGVEQLEKGSPGGPPPSWVR. Ser838 carries the post-translational modification Phosphoserine. FAD is bound by residues Arg940, Tyr942, Ser943, Thr958, Ala960, Tyr964, Val977, Cys978, and Ser979. 7 residues coordinate NADP(+): Thr1018, Arg1051, Ser1080, Arg1081, Lys1087, Tyr1089, and Gln1091. Residue Thr1177 is modified to Phosphothreonine. Ser1179 is subject to Phosphoserine; by AMPK. Ser1181 carries the post-translational modification Phosphoserine.

Belongs to the NOS family. As to quaternary structure, homodimer. Interacts with NOSIP and NOSTRIN. Interacts with HSP90AB1. Forms a complex with ASL, ASS1 and SLC7A1; the complex regulates cell-autonomous L-arginine synthesis and citrulline recycling while channeling extracellular L-arginine to nitric oxide synthesis pathway. It depends on heme b as a cofactor. The cofactor is FAD. FMN serves as cofactor. Requires (6R)-L-erythro-5,6,7,8-tetrahydrobiopterin as cofactor. Phosphorylation by AMPK at Ser-1179 in the presence of Ca(2+)-calmodulin (CaM) activates activity. In absence of Ca(2+)-calmodulin, AMPK also phosphorylates Thr-497, resulting in inhibition of activity. Phosphorylation of Ser-116 by CDK5 reduces activity.

The protein localises to the membrane. It localises to the caveola. The protein resides in the cytoplasm. It is found in the cytoskeleton. Its subcellular location is the golgi apparatus. The protein localises to the cell membrane. It carries out the reaction 2 L-arginine + 3 NADPH + 4 O2 + H(+) = 2 L-citrulline + 2 nitric oxide + 3 NADP(+) + 4 H2O. With respect to regulation, stimulated by calcium/calmodulin. Inhibited by NOSIP and NOSTRIN. Functionally, produces nitric oxide (NO) which is implicated in vascular smooth muscle relaxation through a cGMP-mediated signal transduction pathway. NO mediates vascular endothelial growth factor (VEGF)-induced angiogenesis in coronary vessels and promotes blood clotting through the activation of platelets. The polypeptide is Nitric oxide synthase 3 (NOS3) (Sus scrofa (Pig)).